Consider the following 86-residue polypeptide: FVNQHLCGSHLVEALYLVCGERGFFYTPKAXXEAEDPQVGEVELGGGPGLGGLQPLALAGPQQXXGIVEQCCTGICSLYQLENYCN.

3 cysteine pairs are disulfide-bonded: C7/C72, C19/C85, and C71/C76. Positions 33 to 63 are cleaved as a propeptide — c peptide; sequence EAEDPQVGEVELGGGPGLGGLQPLALAGPQQ.

It belongs to the insulin family. Heterodimer of a B chain and an A chain linked by two disulfide bonds.

Its subcellular location is the secreted. Functionally, insulin decreases blood glucose concentration. It increases cell permeability to monosaccharides, amino acids and fatty acids. It accelerates glycolysis, the pentose phosphate cycle, and glycogen synthesis in liver. This is Insulin (INS) from Equus caballus (Horse).